Reading from the N-terminus, the 67-residue chain is Small ribosomal subunit protein eS17 (67 aa).

Belongs to the eukaryotic ribosomal protein eS17 family.

This chain is Small ribosomal subunit protein eS17, found in Haloquadratum walsbyi (strain DSM 16790 / HBSQ001).